A 472-amino-acid chain; its full sequence is Probable endopolygalacturonase D (472 aa).

An N-terminal signal peptide occupies residues 1 to 16 (MKRGALLVPFVPLALA). Asn24 carries N-linked (GlcNAc...) asparagine glycosylation. The cysteines at positions 129 and 144 are disulfide-linked. 3 PbH1 repeats span residues 236–258 (MYYS…DIEH), 259–297 (TENL…DIKS), and 298–319 (STNL…AVSS). Asn300 is a glycosylation site (N-linked (GlcNAc...) asparagine). The Proton donor role is filled by Asp312. Cys314 and Cys330 form a disulfide bridge. The active site involves His334. PbH1 repeat units lie at residues 349–370 (VDGV…RIKS), 378–400 (VSNI…DIQQ), 412–433 (TNGV…SDGK), and 444–467 (CSNF…YPTD). Asn361, Asn385, and Asn419 each carry an N-linked (GlcNAc...) asparagine glycan. 2 cysteine pairs are disulfide-bonded: Cys439–Cys444 and Cys462–Cys469.

This sequence belongs to the glycosyl hydrolase 28 family.

The protein resides in the secreted. It carries out the reaction (1,4-alpha-D-galacturonosyl)n+m + H2O = (1,4-alpha-D-galacturonosyl)n + (1,4-alpha-D-galacturonosyl)m.. In terms of biological role, involved in maceration and soft-rotting of plant tissue. Hydrolyzes the 1,4-alpha glycosidic bonds of de-esterified pectate in the smooth region of the plant cell wall. The chain is Probable endopolygalacturonase D (pgaD) from Neosartorya fischeri (strain ATCC 1020 / DSM 3700 / CBS 544.65 / FGSC A1164 / JCM 1740 / NRRL 181 / WB 181) (Aspergillus fischerianus).